A 444-amino-acid polypeptide reads, in one-letter code: Phosphoglucosamine mutase (444 aa).

The Phosphoserine intermediate role is filled by serine 102. Serine 102, aspartate 239, aspartate 241, and aspartate 243 together coordinate Mg(2+). Serine 102 carries the post-translational modification Phosphoserine.

It belongs to the phosphohexose mutase family. The cofactor is Mg(2+). Activated by phosphorylation.

It carries out the reaction alpha-D-glucosamine 1-phosphate = D-glucosamine 6-phosphate. Catalyzes the conversion of glucosamine-6-phosphate to glucosamine-1-phosphate. This Mycolicibacterium paratuberculosis (strain ATCC BAA-968 / K-10) (Mycobacterium paratuberculosis) protein is Phosphoglucosamine mutase.